The chain runs to 424 residues: UPF0597 protein Shew185_3080 (424 aa).

This sequence belongs to the UPF0597 family.

The polypeptide is UPF0597 protein Shew185_3080 (Shewanella baltica (strain OS185)).